The sequence spans 287 residues: NAD-dependent protein deacylase sir-2.2 (287 aa).

Residues 10-287 (AELCENSLKK…YKISDVLKEM (278 aa)) enclose the Deacetylase sirtuin-type domain. Residues 35–55 (GAGI…VGLY) and 116–119 (QNVD) each bind NAD(+). Histidine 134 acts as the Proton acceptor in catalysis. The Zn(2+) site is built by cysteine 142, cysteine 145, cysteine 196, and cysteine 199. Residues 236–238 (GTS), 262–264 (NIG), and isoleucine 280 contribute to the NAD(+) site.

Belongs to the sirtuin family. Class II subfamily. In terms of assembly, interacts with pyc-1, pcca-1 and mccc-1. It depends on Zn(2+) as a cofactor. In terms of tissue distribution, ubiquitously expressed with high expression in the pharynx, body wall muscles and gonad.

The protein localises to the mitochondrion matrix. It is found in the mitochondrion. It carries out the reaction N(6)-acetyl-L-lysyl-[protein] + NAD(+) + H2O = 2''-O-acetyl-ADP-D-ribose + nicotinamide + L-lysyl-[protein]. In terms of biological role, NAD-dependent protein deacylase. Catalyzes the NAD-dependent hydrolysis of acyl groups from lysine residues. Plays a role in oxidative stress resistance. The sequence is that of NAD-dependent protein deacylase sir-2.2 (sir-2.2) from Caenorhabditis elegans.